A 65-amino-acid chain; its full sequence is Small ribosomal subunit protein bS21 (65 aa).

Belongs to the bacterial ribosomal protein bS21 family.

This chain is Small ribosomal subunit protein bS21, found in Geotalea daltonii (strain DSM 22248 / JCM 15807 / FRC-32) (Geobacter daltonii).